The chain runs to 464 residues: Hydrogen cyanide synthase subunit HcnB (464 aa).

In terms of assembly, heterotrimer of HcnA, HcnB and HcnC.

The protein localises to the cell membrane. It catalyses the reaction glycine + 2 A = hydrogen cyanide + 2 AH2 + CO2. With respect to regulation, oxygen is necessary for cyanogenesis. Activated by succinate, glycine methyl ester, glucose and D,L-methionine in addition to glycine. Phenazine methosulfate, methylene blue, 2,6-dichlorophenolindophenol (DCIP) and ferricyanide can replace oxygen for the reaction. Inhibited by pyrrolnitrin and acriflavine at 1 mM concentration. Its function is as follows. A three-component membrane-bound flavoenzyme that catalyzes the formation of hydrogen cyanide, a secondary metabolite, by transfer of electrons to a cyanide-resistant branch of the aerobic respiratory chain. The chain is Hydrogen cyanide synthase subunit HcnB from Pseudomonas aeruginosa (strain ATCC 15692 / DSM 22644 / CIP 104116 / JCM 14847 / LMG 12228 / 1C / PRS 101 / PAO1).